Reading from the N-terminus, the 288-residue chain is Pyridoxal kinase PdxY (288 aa).

Residues Ser10 and 45 to 46 (TQ) each bind substrate. Positions 112, 143, 148, and 181 each coordinate ATP. Asp222 serves as a coordination point for substrate.

The protein belongs to the pyridoxine kinase family. PdxY subfamily. In terms of assembly, homodimer. The cofactor is Mg(2+).

The catalysed reaction is pyridoxal + ATP = pyridoxal 5'-phosphate + ADP + H(+). It functions in the pathway cofactor metabolism; pyridoxal 5'-phosphate salvage; pyridoxal 5'-phosphate from pyridoxal: step 1/1. Functionally, pyridoxal kinase involved in the salvage pathway of pyridoxal 5'-phosphate (PLP). Catalyzes the phosphorylation of pyridoxal to PLP. This chain is Pyridoxal kinase PdxY, found in Paraburkholderia xenovorans (strain LB400).